The primary structure comprises 198 residues: N-acetyltransferase 9-like protein (198 aa).

Positions 14-186 (IILVPYKEKH…SNNFTNLTAD (173 aa)) constitute an N-acetyltransferase domain.

The protein belongs to the acetyltransferase family. GNAT subfamily.

In Nematostella vectensis (Starlet sea anemone), this protein is N-acetyltransferase 9-like protein (nat9).